The sequence spans 1247 residues: Lon protease homolog 2, peroxisomal (1247 aa).

The 381-residue stretch at leucine 22–isoleucine 402 folds into the Lon N-terminal domain. 3 disordered regions span residues serine 76–histidine 103, threonine 447–aspartate 503, and aspartate 626–serine 655. Positions proline 459 to glycine 477 are enriched in low complexity. Residues aspartate 626–lysine 639 are compositionally biased toward basic and acidic residues. Position 721–728 (glycine 721–threonine 728) interacts with ATP. The Lon proteolytic domain maps to threonine 989–glutamate 1230. Residues serine 1099 and lysine 1142 contribute to the active site.

The protein belongs to the peptidase S16 family.

The protein localises to the peroxisome matrix. The enzyme catalyses Hydrolysis of proteins in presence of ATP.. In terms of biological role, ATP-dependent serine protease that mediates the selective degradation of misfolded and unassembled polypeptides in the peroxisomal matrix. Necessary for type 2 peroxisome targeting signal (PTS2)-containing protein processing and facilitates peroxisome matrix protein import. This chain is Lon protease homolog 2, peroxisomal, found in Candida dubliniensis (strain CD36 / ATCC MYA-646 / CBS 7987 / NCPF 3949 / NRRL Y-17841) (Yeast).